Here is a 272-residue protein sequence, read N- to C-terminus: Iodotyrosine deiodinase (272 aa).

Residues 5–25 (LSGVSYGLLAGILAMLIHLVY) form a helical membrane-spanning segment. FMN is bound by residues 82–86 (RRSVR), serine 110, and 110–111 (SG). 4 residues coordinate 3-iodo-L-tyrosine: alanine 112, glutamate 139, tyrosine 143, and lysine 164. Residues 219–221 (TST) and arginine 261 each bind FMN.

The protein belongs to the nitroreductase family. FMN is required as a cofactor.

The protein resides in the membrane. The enzyme catalyses 2 iodide + L-tyrosine + 2 NADP(+) = 3,5-diiodo-L-tyrosine + 2 NADPH + H(+). It carries out the reaction iodide + L-tyrosine + NADP(+) = 3-iodo-L-tyrosine + NADPH. It catalyses the reaction 3-iodo-L-tyrosine + iodide + NADP(+) = 3,5-diiodo-L-tyrosine + NADPH + H(+). The catalysed reaction is L-tyrosine + chloride + NADP(+) = 3-chloro-L-tyrosine + NADPH. The enzyme catalyses bromide + L-tyrosine + NADP(+) = 3-bromo-L-tyrosine + NADPH. In terms of biological role, catalyzes the dehalogenation of halotyrosines such as 3,5-diiodo-L-tyrosine. Likely to also catalyze the dehalogenation of other halotyrosines such as 3-bromo-L-tyrosine, 3-chloro-L-tyrosine and 3-iodo-L-tyrosine. The protein is Iodotyrosine deiodinase of Hydra vulgaris (Hydra).